Here is a 334-residue protein sequence, read N- to C-terminus: uncharacterized protein (334 aa).

Tyrosine 52 functions as the Proton donor in the catalytic mechanism. Positions 314–334 are disordered; it reads LPPPASPNSEPQVTGGCSSMC. Residues 320-334 are compositionally biased toward polar residues; sequence PNSEPQVTGGCSSMC.

The protein belongs to the aldo/keto reductase family.

It localises to the cytoplasm. Its subcellular location is the nucleus. This is an uncharacterized protein from Schizosaccharomyces pombe (strain 972 / ATCC 24843) (Fission yeast).